A 309-amino-acid polypeptide reads, in one-letter code: MVAQYIGRFSPSPTGPLHAGSLVAALASWLDARAHAGQWLVRIEDVDTPRCVAGMDRVILQQLAACGLHADQPPVWQSQRTGLYQQALDQLVVQGLAYPCACSRKDIETALSRLGQARARHGELVYPGTCRTGLHGRVGRAWRLRTDLFKQNKPLATVEYTQEATNLIACNIIHWTDRRLGAQQQDVPAQVGDFVLKRFDGCFTYQLAVVVDDAAQGITDVVRGEDLADNTARQILLQQYLGLPTPRYLHTPLVLGAHGEKLSKQNGAQALDTTEPLAALNHAARVLGLPACSGSVAGALEAWVEAWDA.

L-glutamate-binding positions include arginine 8–serine 12 and glutamate 44. Residues proline 11–serine 21 carry the 'HIGH' region motif. Zn(2+)-binding residues include cysteine 100, cysteine 102, tyrosine 126, and cysteine 130. Tyrosine 205 and arginine 223 together coordinate L-glutamate. The short motif at lysine 261–glutamine 265 is the 'KMSKS' region element. Lysine 264 contacts ATP.

Belongs to the class-I aminoacyl-tRNA synthetase family. GluQ subfamily. The cofactor is Zn(2+).

Catalyzes the tRNA-independent activation of glutamate in presence of ATP and the subsequent transfer of glutamate onto a tRNA(Asp). Glutamate is transferred on the 2-amino-5-(4,5-dihydroxy-2-cyclopenten-1-yl) moiety of the queuosine in the wobble position of the QUC anticodon. The protein is Glutamyl-Q tRNA(Asp) synthetase of Albidiferax ferrireducens (strain ATCC BAA-621 / DSM 15236 / T118) (Rhodoferax ferrireducens).